The sequence spans 367 residues: Peptide chain release factor 2 (367 aa).

Gln250 carries the post-translational modification N5-methylglutamine.

This sequence belongs to the prokaryotic/mitochondrial release factor family. Methylated by PrmC. Methylation increases the termination efficiency of RF2.

It is found in the cytoplasm. Peptide chain release factor 2 directs the termination of translation in response to the peptide chain termination codons UGA and UAA. The sequence is that of Peptide chain release factor 2 from Chloroflexus aggregans (strain MD-66 / DSM 9485).